We begin with the raw amino-acid sequence, 207 residues long: Basic helix-loop-helix transcription factor scleraxis (207 aa).

2 disordered regions span residues 1–91 (MSFA…RDRT) and 151–183 (AFFH…QPKQ). Basic and acidic residues predominate over residues 73-91 (PGREPRQRHTANARERDRT). Residues 78–130 (RQRHTANARERDRTNSVNTAFTALRTLIPTEPADRKLSKIETLRLASSYISHL) form the bHLH domain. A compositionally biased stretch (pro residues) spans 161-171 (PLPPPPPPPPL).

In terms of assembly, efficient DNA binding requires dimerization with another bHLH protein. Dimerizes and binds the E-box consensus sequence with E12. In terms of tissue distribution, expressed in mesenchymal precursors of cartilage and in connective tissue. Highly expressed in tendons in the limb, tongue and diaphragm and in cartilage of the bronchi.

It localises to the nucleus. Its function is as follows. Plays an early essential role in mesoderm formation, as well as a later role in formation of somite-derived chondrogenic lineages. The sequence is that of Basic helix-loop-helix transcription factor scleraxis (Scx) from Mus musculus (Mouse).